We begin with the raw amino-acid sequence, 43 residues long: Augerpeptide hhe9.2 (43 aa).

Residues 2–40 enclose the EGF-like domain; that stretch reads EEVGCFPNVCKNDGNCSIETSTGMTRCQCLEGYTGHVCE. Cystine bridges form between C6–C28, C11–C30, and C17–C39.

As to expression, expressed by the venom duct.

It localises to the secreted. The polypeptide is Augerpeptide hhe9.2 (Hastula hectica (Sea snail)).